The chain runs to 490 residues: MKLTKLLTYLMAEPVQNDFHDPDITSIEMDSREVRKGSLFVCIKGYTVDGHDFAQKAAENGAAAIVAEKELDVDVPVIIVRRSQRALSVLSDAFYGQPTKQLQLIGITGTNGKTSTTHMVDEIFKKAGRQTGLIGTMYIKIGDETFPVKNTTPESVTLQKTFKKMNDEHVDTAIMEVSSHALSLGRVHGCDYDIAVFTNLTQDHLDYHKTMEDYRQAKSLLFSQLGGSFNHEKPKRAVLNADDKASAYFEKVTAAHILTYGIENDADVMAKQIEISAQGTSFELVTPKGTKQITVSLVGRFNVYNVLAAAATGIAAGLPFDTITSALEELQGVRGRFELVNHNQPFPVVVDYAHTPDSLENVLNTCKDMTEGKLFVVVGCGGDRDKTKRPKMAEIAVRIADEPIFTSDNPRSEDPLAILRDMERGVEGTYYHSIANREQAIFFAIANAKKGDVVLIAGKGHETYQQIGNETFDFDDAEVAGRAIVELNKK.

Ser31 is a binding site for UDP-N-acetyl-alpha-D-muramoyl-L-alanyl-D-glutamate. Gly109–Ser115 provides a ligand contact to ATP. UDP-N-acetyl-alpha-D-muramoyl-L-alanyl-D-glutamate contacts are provided by residues Asn150, Thr151 to Thr152, Ser178, and Arg186. Lys218 carries the N6-carboxylysine modification. Meso-2,6-diaminopimelate contacts are provided by residues Arg384, Asp408–Arg411, Gly458, and Glu462. Residues Asp408–Arg411 carry the Meso-diaminopimelate recognition motif motif.

This sequence belongs to the MurCDEF family. MurE subfamily. Requires Mg(2+) as cofactor. In terms of processing, carboxylation is probably crucial for Mg(2+) binding and, consequently, for the gamma-phosphate positioning of ATP.

It localises to the cytoplasm. The enzyme catalyses UDP-N-acetyl-alpha-D-muramoyl-L-alanyl-D-glutamate + meso-2,6-diaminopimelate + ATP = UDP-N-acetyl-alpha-D-muramoyl-L-alanyl-gamma-D-glutamyl-meso-2,6-diaminopimelate + ADP + phosphate + H(+). It functions in the pathway cell wall biogenesis; peptidoglycan biosynthesis. Functionally, catalyzes the addition of meso-diaminopimelic acid to the nucleotide precursor UDP-N-acetylmuramoyl-L-alanyl-D-glutamate (UMAG) in the biosynthesis of bacterial cell-wall peptidoglycan. This chain is UDP-N-acetylmuramoyl-L-alanyl-D-glutamate--2,6-diaminopimelate ligase, found in Bacillus velezensis (strain DSM 23117 / BGSC 10A6 / LMG 26770 / FZB42) (Bacillus amyloliquefaciens subsp. plantarum).